Here is a 37-residue protein sequence, read N- to C-terminus: Potassium channel toxin alpha-KTx 11.2 (37 aa).

Cystine bridges form between Cys8/Cys27, Cys13/Cys33, and Cys17/Cys35.

Belongs to the short scorpion toxin superfamily. Potassium channel inhibitor family. Alpha-KTx 11 subfamily. Expressed by the venom gland.

It is found in the secreted. Its function is as follows. Binds and inhibits voltage-sensitive potassium channels. Inhibits the vertebrate potassium channel Kv1.1/KCNA1 with low affinity. The polypeptide is Potassium channel toxin alpha-KTx 11.2 (Parabuthus villosus (Black hairy thick-tailed scorpion)).